Here is a 292-residue protein sequence, read N- to C-terminus: Acetyl-coenzyme A carboxylase carboxyl transferase subunit beta (292 aa).

The 257-residue stretch at 36 to 292 folds into the CoA carboxyltransferase N-terminal domain; sequence MWSKCEKCAK…LLRMHEVDYE (257 aa). Residues C40, C43, C59, and C62 each contribute to the Zn(2+) site. The C4-type zinc finger occupies 40-62; it reads CEKCAKILYTEDLRENFNVCPNC.

This sequence belongs to the AccD/PCCB family. In terms of assembly, acetyl-CoA carboxylase is a heterohexamer composed of biotin carboxyl carrier protein (AccB), biotin carboxylase (AccC) and two subunits each of ACCase subunit alpha (AccA) and ACCase subunit beta (AccD). Zn(2+) serves as cofactor.

The protein resides in the cytoplasm. It carries out the reaction N(6)-carboxybiotinyl-L-lysyl-[protein] + acetyl-CoA = N(6)-biotinyl-L-lysyl-[protein] + malonyl-CoA. Its pathway is lipid metabolism; malonyl-CoA biosynthesis; malonyl-CoA from acetyl-CoA: step 1/1. In terms of biological role, component of the acetyl coenzyme A carboxylase (ACC) complex. Biotin carboxylase (BC) catalyzes the carboxylation of biotin on its carrier protein (BCCP) and then the CO(2) group is transferred by the transcarboxylase to acetyl-CoA to form malonyl-CoA. In Clostridium perfringens (strain 13 / Type A), this protein is Acetyl-coenzyme A carboxylase carboxyl transferase subunit beta.